The primary structure comprises 104 residues: Gallinacin-11 (104 aa).

Residues 1–22 form the signal peptide; the sequence is MKLFSCLMALLLFLLQAVPGLG. 3 disulfides stabilise this stretch: Cys30/Cys60, Cys37/Cys53, and Cys43/Cys61.

It belongs to the beta-defensin family. In terms of tissue distribution, detected in outer membrane of the vitelline layer of the egg (at protein level). Expressed in the liver, gall bladder, kidney, testis, ovary and male and female reproductive tracts. Expressed in the ovarian stroma, but not in the ovarian follicles. No expression is detected in bone marrow.

The protein resides in the secreted. It localises to the cytoplasmic granule. In terms of biological role, has bactericidal activity. This chain is Gallinacin-11 (GAL11), found in Gallus gallus (Chicken).